Consider the following 79-residue polypeptide: Small ribosomal subunit protein uS17 (79 aa).

The protein belongs to the universal ribosomal protein uS17 family. Part of the 30S ribosomal subunit.

One of the primary rRNA binding proteins, it binds specifically to the 5'-end of 16S ribosomal RNA. This is Small ribosomal subunit protein uS17 from Caulobacter vibrioides (strain NA1000 / CB15N) (Caulobacter crescentus).